Consider the following 181-residue polypeptide: Copper-resistant cuproprotein CopI (181 aa).

The signal sequence occupies residues M1–A24. Cu(2+) contacts are provided by H79, C163, H168, and M173.

This sequence belongs to the CopI family.

Its subcellular location is the periplasm. Involved in copper tolerance. The polypeptide is Copper-resistant cuproprotein CopI (Pseudomonas aeruginosa (strain ATCC 15692 / DSM 22644 / CIP 104116 / JCM 14847 / LMG 12228 / 1C / PRS 101 / PAO1)).